We begin with the raw amino-acid sequence, 837 residues long: E3 ubiquitin-protein ligase bre-1 (837 aa).

The interval 1-33 (MMKRSNEGIGGENYASSPSDDGQQKRRKIQFEP) is disordered. Residues 1–313 (MMKRSNEGIG…AKEIENLRLE (313 aa)) form an interaction with ubc-1 region. Coiled coils occupy residues 54–89 (TSKLKQQLLYKNKRIAELEKENERSKRRQQTDESNF) and 185–253 (HKEL…KHMR). The segment at 269–302 (GQSGGNGGATPSSSGTTNATEKKISAPDIPPSET) is disordered. Residues 277-287 (ATPSSSGTTNA) show a composition bias toward polar residues. Coiled coils occupy residues 300–397 (SETA…AFRS), 458–651 (DEMK…KAQT), and 677–763 (VQFK…NESV). The RING-type zinc-finger motif lies at 785–824 (CPSCKTRPKDCIMLKCYHLFCETCIKTMYDTRQRKCPKCN).

Belongs to the BRE1 family. As to quaternary structure, interacts with ubc-1. Interacts with mrg-1. As to expression, in adult animals, expressed in oocytes, germ cells, pharyngeal and intestinal cells.

Its subcellular location is the nucleus. It catalyses the reaction S-ubiquitinyl-[E2 ubiquitin-conjugating enzyme]-L-cysteine + [acceptor protein]-L-lysine = [E2 ubiquitin-conjugating enzyme]-L-cysteine + N(6)-ubiquitinyl-[acceptor protein]-L-lysine.. It participates in protein modification; protein ubiquitination. Its function is as follows. E3 ubiquitin-protein ligase that mediates monoubiquitination of 'Lys-117' of histone H2B. H2B 'Lys-117' ubiquitination gives a specific tag for epigenetic transcriptional activation and is also prerequisite for histone H3 'Lys-4' and 'Lys-79' methylation. Involved in regulating stem cell proliferative fate. In Caenorhabditis elegans, this protein is E3 ubiquitin-protein ligase bre-1 (rfp-1).